Consider the following 440-residue polypeptide: uncharacterized protein (440 aa).

The N-terminal stretch at 1–17 is a signal peptide; that stretch reads MDRFFCTVWVWSVLFGA. C18 carries the N-palmitoyl cysteine lipid modification. Residue C18 is the site of S-diacylglycerol cysteine attachment. The interval 241–268 is disordered; that stretch reads SALQERPSSPEPVVSTIPSPEGEENSAA.

The protein localises to the cell membrane. This is an uncharacterized protein from Treponema pallidum (strain Nichols).